The sequence spans 176 residues: Large ribosomal subunit protein uL6 (176 aa).

The protein belongs to the universal ribosomal protein uL6 family. As to quaternary structure, part of the 50S ribosomal subunit.

Functionally, this protein binds to the 23S rRNA, and is important in its secondary structure. It is located near the subunit interface in the base of the L7/L12 stalk, and near the tRNA binding site of the peptidyltransferase center. The protein is Large ribosomal subunit protein uL6 of Dechloromonas aromatica (strain RCB).